We begin with the raw amino-acid sequence, 403 residues long: RILP-like protein 1 (403 aa).

S7 carries the post-translational modification Phosphoserine. The RH1 domain maps to 10-97; that stretch reads AAESALEKNV…RLERMDRIEK (88 aa). C47 is modified (S-nitrosocysteine). The stretch at 76–265 forms a coiled coil; it reads ELDELRLELD…GELNQNGEEE (190 aa). The region spanning 291–356 is the RH2 domain; sequence RPRFTLQELR…PQPESGIKRL (66 aa). A disordered region spans residues 329–348; sequence EEENQIPQPPPIAHPRMSPQ.

The protein belongs to the RILPL family. Interacts (when S-nitrosylated) with GAPDH. Interacts with RAB8A; interaction is dependent on the phosphorylation of 'Thr-72' of RAB8A. Interacts with RAB10 and RAB12; the interaction is dependent on the phosphorylation of 'Thr-73' of RAB10, and 'Ser-105' of RAB12. In terms of processing, S-nitrosylation is required for the interaction with GAPDH.

The protein localises to the cytoplasm. Its subcellular location is the cytosol. The protein resides in the cytoskeleton. It is found in the microtubule organizing center. It localises to the centrosome. The protein localises to the centriole. Its subcellular location is the cilium basal body. Functionally, plays a role in the regulation of cell shape and polarity. Plays a role in cellular protein transport, including protein transport away from primary cilia. Neuroprotective protein, which acts by sequestring GAPDH in the cytosol and prevent the apoptotic function of GAPDH in the nucleus. Competes with SIAH1 for binding GAPDH. Does not regulate lysosomal morphology and distribution. Binds to RAB10 following LRRK2-mediated RAB10 phosphorylation which leads to inhibition of ciliogenesis. This Bos taurus (Bovine) protein is RILP-like protein 1 (RILPL1).